Here is a 410-residue protein sequence, read N- to C-terminus: Mating-type locus allele B5 protein (410 aa).

Residues 1–110 (MSSDPNFSLT…FNVVSPAVVC (110 aa)) are variable domain between B alleles. A DNA-binding region (homeobox; TALE-type) is located at residues 107-184 (AVVCRNLSED…NARRRSGWSH (78 aa)). The interval 111–410 (RNLSEDLPAY…PFLCLSVAFV (300 aa)) is highly conserved between B alleles. Disordered stretches follow at residues 201-241 (VRAK…TPAD), 275-336 (NKKT…PELS), and 366-395 (ILQSPTVKARGNRKVKALPKRAGKQQPDEV). Low complexity predominate over residues 206–222 (SSSNQSTPPSPTSEYPS). The Nuclear localization signal signature appears at 276–308 (KKTPKPGMPRPVTTVTKRQPARKTKPAAKPKSR). Positions 294–307 (QPARKTKPAAKPKS) are enriched in basic residues. A compositionally biased stretch (polar residues) spans 312 to 336 (PRASTTPSIDSTLDSSKLESTPELS). Residues 333-410 (PELSMCSTAD…PFLCLSVAFV (78 aa)) are not essential for B5 function. Over residues 375–388 (RGNRKVKALPKRAG) the composition is skewed to basic residues.

It belongs to the TALE/M-ATYP homeobox family.

It is found in the nucleus. The B locus has at least 25 alleles, and any combination of two different B alleles yields a multimeric regulatory protein, that activates genes responsible for the pathogenicity and for the sexual development of the fungus within the corn plant. In Mycosarcoma maydis (Corn smut fungus), this protein is Mating-type locus allele B5 protein.